Here is a 552-residue protein sequence, read N- to C-terminus: CTP synthase (552 aa).

The amidoligase domain stretch occupies residues 1 to 267 (MAKFIFVTGG…AEQTLKLLRM (267 aa)). S13 is a CTP binding site. Position 13 (S13) interacts with UTP. Residues 14–19 (SIGKGI) and D71 each bind ATP. D71 and E141 together coordinate Mg(2+). CTP contacts are provided by residues 148–150 (DIE), 188–193 (KTKPTQ), and K224. UTP contacts are provided by residues 188–193 (KTKPTQ) and K224. Positions 292–534 (DIAIVGKYVQ…IQAAGNHKSQ (243 aa)) constitute a Glutamine amidotransferase type-1 domain. Residue G354 coordinates L-glutamine. C381 serves as the catalytic Nucleophile; for glutamine hydrolysis. Residues 382-385 (LGMQ), E405, and R462 each bind L-glutamine. Active-site residues include H507 and E509. A disordered region spans residues 533–552 (SQPISDELDNQSTEMSISLS).

Belongs to the CTP synthase family. In terms of assembly, homotetramer.

The catalysed reaction is UTP + L-glutamine + ATP + H2O = CTP + L-glutamate + ADP + phosphate + 2 H(+). The enzyme catalyses L-glutamine + H2O = L-glutamate + NH4(+). It catalyses the reaction UTP + NH4(+) + ATP = CTP + ADP + phosphate + 2 H(+). The protein operates within pyrimidine metabolism; CTP biosynthesis via de novo pathway; CTP from UDP: step 2/2. Its activity is regulated as follows. Allosterically activated by GTP, when glutamine is the substrate; GTP has no effect on the reaction when ammonia is the substrate. The allosteric effector GTP functions by stabilizing the protein conformation that binds the tetrahedral intermediate(s) formed during glutamine hydrolysis. Inhibited by the product CTP, via allosteric rather than competitive inhibition. In terms of biological role, catalyzes the ATP-dependent amination of UTP to CTP with either L-glutamine or ammonia as the source of nitrogen. Regulates intracellular CTP levels through interactions with the four ribonucleotide triphosphates. In Picosynechococcus sp. (strain ATCC 27264 / PCC 7002 / PR-6) (Agmenellum quadruplicatum), this protein is CTP synthase.